The chain runs to 217 residues: 3,4-dihydroxy-2-butanone 4-phosphate synthase (217 aa).

D-ribulose 5-phosphate-binding positions include 37–38 (RE), Asp42, 150–154 (RGGHT), and Glu174. Mg(2+) is bound at residue Glu38. His153 is a Mg(2+) binding site.

Belongs to the DHBP synthase family. As to quaternary structure, homodimer. The cofactor is Mg(2+). Mn(2+) serves as cofactor.

It carries out the reaction D-ribulose 5-phosphate = (2S)-2-hydroxy-3-oxobutyl phosphate + formate + H(+). It functions in the pathway cofactor biosynthesis; riboflavin biosynthesis; 2-hydroxy-3-oxobutyl phosphate from D-ribulose 5-phosphate: step 1/1. Catalyzes the conversion of D-ribulose 5-phosphate to formate and 3,4-dihydroxy-2-butanone 4-phosphate. This is 3,4-dihydroxy-2-butanone 4-phosphate synthase from Escherichia coli O17:K52:H18 (strain UMN026 / ExPEC).